The primary structure comprises 509 residues: GMP synthase [glutamine-hydrolyzing] (509 aa).

The 190-residue stretch at 4-193 (KILILDFGSQ…VVHICGCSQD (190 aa)) folds into the Glutamine amidotransferase type-1 domain. Catalysis depends on Cys79, which acts as the Nucleophile. Active-site residues include His167 and Glu169. Residues 194–384 (WTPDAFVETT…LGIDDIILKR (191 aa)) enclose the GMPS ATP-PPase domain. 221 to 227 (SGGVDSS) contributes to the ATP binding site.

In terms of assembly, homodimer.

The catalysed reaction is XMP + L-glutamine + ATP + H2O = GMP + L-glutamate + AMP + diphosphate + 2 H(+). Its pathway is purine metabolism; GMP biosynthesis; GMP from XMP (L-Gln route): step 1/1. Its function is as follows. Catalyzes the synthesis of GMP from XMP. The chain is GMP synthase [glutamine-hydrolyzing] from Cytophaga hutchinsonii (strain ATCC 33406 / DSM 1761 / CIP 103989 / NBRC 15051 / NCIMB 9469 / D465).